We begin with the raw amino-acid sequence, 516 residues long: Chromosomal replication initiator protein DnaA (516 aa).

A domain I, interacts with DnaA modulators region spans residues 1-72 (MSLEHWNLCL…LLSEFAGDDL (72 aa)). The interval 72–179 (LAPALKLAVK…QVEGGINHGA (108 aa)) is domain II. Residues 180-396 (NLNNSFTFDN…GALKRVIANS (217 aa)) are domain III, AAA+ region. The ATP site is built by Gly-224, Gly-226, Lys-227, and Thr-228. The interval 397–516 (HFTGRAITPD…YKQLMRILTT (120 aa)) is domain IV, binds dsDNA.

The protein belongs to the DnaA family. In terms of assembly, oligomerizes as a right-handed, spiral filament on DNA at oriC.

The protein localises to the cytoplasm. Plays an essential role in the initiation and regulation of chromosomal replication. ATP-DnaA binds to the origin of replication (oriC) to initiate formation of the DNA replication initiation complex once per cell cycle. Binds the DnaA box (a 9 base pair repeat at the origin) and separates the double-stranded (ds)DNA. Forms a right-handed helical filament on oriC DNA; dsDNA binds to the exterior of the filament while single-stranded (ss)DNA is stabiized in the filament's interior. The ATP-DnaA-oriC complex binds and stabilizes one strand of the AT-rich DNA unwinding element (DUE), permitting loading of DNA polymerase. After initiation quickly degrades to an ADP-DnaA complex that is not apt for DNA replication. Binds acidic phospholipids. The sequence is that of Chromosomal replication initiator protein DnaA from Marinomonas sp. (strain MWYL1).